We begin with the raw amino-acid sequence, 185 residues long: NOP protein chaperone 1 (185 aa).

Residues S34, S66, and S177 each carry the phosphoserine modification. Residues 121–185 (SRSDSKEEDS…DSPASKKKKQ (65 aa)) form a disordered region.

As to quaternary structure, interacts with NOP58, RUVBL1 and RUVBL2; the interactions are direct and NOPCHAP1 bridges the association of NOP58 with RUVBL1:RUVBL2 even in absence of snoRNAs. The interactions with RUVBL1 and RUVBL2 are disrupted upon ATP binding.

The protein resides in the nucleus. Client-loading PAQosome/R2TP complex cofactor that selects NOP58 to promote box C/D small nucleolar ribonucleoprotein (snoRNP) assembly. Acts as a bridge between NOP58 and the R2TP complex via RUVBL1:RUVBL2. The protein is NOP protein chaperone 1 of Mus musculus (Mouse).